The primary structure comprises 324 residues: MEDLALRPKTLDEYIGQERLKQKLRVYLEAAKARKEPLEHLLLFGPPGLGKTTLAHVIAHELGVNLRVTSGPAIEKPGDLAAILANSLEEGDILFIDEIHRLSRQAEEHLYPAMEDFVMDIVIGQGPAARTIRLELPRFTLIGATTRPGLITAPLLSRFGIVEHLEYYTPEELAQGVMRDARLLGVRITEEAALEIGRRSRGTMRVAKRLFRRVRDFAQVAGEEVITRERALEALAALGLDELGLEKRDREILEVLILRFGGGPVGLATLATALSEDPGTLEEVHEPYLIRQGLLKRTPRGRVATELAYRHLGYPPPVGPLLEP.

The tract at residues 1-168 (MEDLALRPKT…FGIVEHLEYY (168 aa)) is large ATPase domain (RuvB-L). Tyrosine 14, isoleucine 15, glycine 48, lysine 51, threonine 52, threonine 53, aspartate 97, threonine 146, tyrosine 168, and arginine 205 together coordinate ATP. Threonine 52 contributes to the Mg(2+) binding site. Residues 169–239 (TPEELAQGVM…RALEALAALG (71 aa)) form a small ATPAse domain (RuvB-S) region. Positions 242–324 (ELGLEKRDRE…PPPVGPLLEP (83 aa)) are head domain (RuvB-H). Residues arginine 297 and arginine 302 each contribute to the DNA site.

It belongs to the RuvB family. Homohexamer. Forms a complex with RuvA. Electron microscopic images suggest 2 closely interacting RuvA tetramers sandwich the HJ DNA; each tetramer associates with an RuvB hexamer. Forms 2 complexes with Holliday junction (HJ) DNA which probably have 1 and 2 RuvA tetramers per complex (called complex I and complex II). Forms an RuvA(8)-RuvB(12)-Holliday junction (HJ) complex. HJ DNA is sandwiched between 2 RuvA tetramers; dsDNA enters through RuvA and exits via RuvB. An RuvB hexamer assembles on each DNA strand where it exits the tetramer. Each RuvB hexamer is contacted by two RuvA subunits (via domain III) on 2 adjacent RuvB subunits; this complex drives branch migration. In the full resolvosome a probable DNA-RuvA(4)-RuvB(12)-RuvC(2) complex forms which resolves the HJ. Mg(2+) is required as a cofactor.

It is found in the cytoplasm. It carries out the reaction ATP + H2O = ADP + phosphate + H(+). Its activity is regulated as follows. The activity of RuvB is enhanced by E.coli RuvA. Functionally, the RuvA-RuvB-RuvC complex processes Holliday junction (HJ) DNA during genetic recombination and DNA repair, while the RuvA-RuvB complex plays an important role in the rescue of blocked DNA replication forks via replication fork reversal (RFR). RuvA specifically binds to HJ cruciform DNA, conferring on it an open structure. The RuvB hexamer acts as an ATP-dependent pump, pulling dsDNA into and through the RuvAB complex. RuvB forms 2 homohexamers on either side of HJ DNA bound by 1 or 2 RuvA tetramers; 4 subunits per hexamer contact DNA at a time. Coordinated motions by a converter formed by DNA-disengaged RuvB subunits stimulates ATP hydrolysis and nucleotide exchange. Immobilization of the converter enables RuvB to convert the ATP-contained energy into a lever motion, pulling 2 nucleotides of DNA out of the RuvA tetramer per ATP hydrolyzed, thus driving DNA branch migration. The RuvB motors rotate together with the DNA substrate, which together with the progressing nucleotide cycle form the mechanistic basis for DNA recombination by continuous HJ branch migration. Branch migration allows RuvC to scan DNA until it finds its consensus sequence, where it cleaves and resolves cruciform DNA. Its function is as follows. RuvB is a Mg(2+)-dependent, DNA-dependent ATPase with an equal preference for supercoiled and linear dsDNA; all (d)NTPs tested were efficiently hydrolyzed. Promotes Holliday junction (HJ) dissociation at 60 degrees Celsius in the presence of ATP but not ATP-gamma-S or ADP; (d)ATP, (d)CTP and dTTP also power dissociation in the absence of any RuvA. RuvA stimulates the ATPase of RuvB in the presence of dsDNA and HJ branch migration by RuvB. Excess RuvB stimulates some branch migration in vitro even in the presence of mutant RuvA. The chain is Holliday junction branch migration complex subunit RuvB from Thermus thermophilus (strain ATCC 27634 / DSM 579 / HB8).